Reading from the N-terminus, the 155-residue chain is SsrA-binding protein (155 aa).

Belongs to the SmpB family.

It localises to the cytoplasm. Functionally, required for rescue of stalled ribosomes mediated by trans-translation. Binds to transfer-messenger RNA (tmRNA), required for stable association of tmRNA with ribosomes. tmRNA and SmpB together mimic tRNA shape, replacing the anticodon stem-loop with SmpB. tmRNA is encoded by the ssrA gene; the 2 termini fold to resemble tRNA(Ala) and it encodes a 'tag peptide', a short internal open reading frame. During trans-translation Ala-aminoacylated tmRNA acts like a tRNA, entering the A-site of stalled ribosomes, displacing the stalled mRNA. The ribosome then switches to translate the ORF on the tmRNA; the nascent peptide is terminated with the 'tag peptide' encoded by the tmRNA and targeted for degradation. The ribosome is freed to recommence translation, which seems to be the essential function of trans-translation. The protein is SsrA-binding protein of Streptococcus sanguinis (strain SK36).